The primary structure comprises 227 residues: Mediator of RNA polymerase II transcription subunit 18 (227 aa).

Belongs to the Mediator complex subunit 18 family. Component of the Mediator complex.

It localises to the nucleus. Its function is as follows. Component of the Mediator complex, a coactivator involved in the regulated transcription of nearly all RNA polymerase II-dependent genes. Mediator functions as a bridge to convey information from gene-specific regulatory proteins to the basal RNA polymerase II transcription machinery. Mediator is recruited to promoters by direct interactions with regulatory proteins and serves as a scaffold for the assembly of a functional preinitiation complex with RNA polymerase II and the general transcription factors. In Caenorhabditis briggsae, this protein is Mediator of RNA polymerase II transcription subunit 18 (mdt-18).